The primary structure comprises 295 residues: uncharacterized protein (295 aa).

A signal peptide spans 1 to 19 (MFKKYIFILILFIASIARA). A disordered region spans residues 275–295 (RNNPPLKNNNAKGKNPYDTNK). Residues 276–295 (NNPPLKNNNAKGKNPYDTNK) are compositionally biased toward low complexity.

This is an uncharacterized protein from Rickettsia conorii (strain ATCC VR-613 / Malish 7).